Here is a 346-residue protein sequence, read N- to C-terminus: uncharacterized protein (346 aa).

Residues 322 to 346 (GRDGGYRETTSPPTGRGRNVRGSHA) form a disordered region.

This is an uncharacterized protein from Mycobacterium tuberculosis (strain CDC 1551 / Oshkosh).